A 124-amino-acid polypeptide reads, in one-letter code: Small ribosomal subunit protein uS12 (124 aa).

The residue at position 89 (Asp-89) is a 3-methylthioaspartic acid. Residues 104-124 form a disordered region; that stretch reads ALGVEDRKRGRSKYGAKRPKA. Residues 112–124 are compositionally biased toward basic residues; sequence RGRSKYGAKRPKA.

It belongs to the universal ribosomal protein uS12 family. In terms of assembly, part of the 30S ribosomal subunit. Contacts proteins S8 and S17. May interact with IF1 in the 30S initiation complex.

With S4 and S5 plays an important role in translational accuracy. Functionally, interacts with and stabilizes bases of the 16S rRNA that are involved in tRNA selection in the A site and with the mRNA backbone. Located at the interface of the 30S and 50S subunits, it traverses the body of the 30S subunit contacting proteins on the other side and probably holding the rRNA structure together. The combined cluster of proteins S8, S12 and S17 appears to hold together the shoulder and platform of the 30S subunit. The protein is Small ribosomal subunit protein uS12 of Treponema denticola (strain ATCC 35405 / DSM 14222 / CIP 103919 / JCM 8153 / KCTC 15104).